A 628-amino-acid chain; its full sequence is Propionate--CoA ligase (628 aa).

This sequence belongs to the ATP-dependent AMP-binding enzyme family.

It catalyses the reaction propanoate + ATP + CoA = propanoyl-CoA + AMP + diphosphate. It participates in organic acid metabolism; propanoate degradation. Catalyzes the synthesis of propionyl-CoA from propionate and CoA. Also converts acetate to acetyl-CoA but with a lower specific activity. The protein is Propionate--CoA ligase (prpE) of Escherichia coli (strain K12).